We begin with the raw amino-acid sequence, 781 residues long: Cytosolic phospholipase A2 beta (781 aa).

The C2 domain occupies 1–112 (MAVAEVSRTC…RAGEFRRESF (112 aa)). Residues aspartate 26, aspartate 32, aspartate 82, aspartate 84, and aspartate 90 each contribute to the Ca(2+) site. In terms of domain architecture, PLA2c spans 246–781 (EAGLRELAVR…VQRRRQRRPH (536 aa)). The active-site Nucleophile is serine 335. Catalysis depends on aspartate 615, which acts as the Proton acceptor.

It depends on Ca(2+) as a cofactor. In terms of tissue distribution, widely expressed. Expressed at higher level in brain, heart, liver, cerebellum and pancreas.

Its subcellular location is the cytoplasm. The protein resides in the cytosol. The protein localises to the mitochondrion membrane. It localises to the early endosome membrane. It carries out the reaction a 1,2-diacyl-sn-glycero-3-phosphocholine + H2O = a 1-acyl-sn-glycero-3-phosphocholine + a fatty acid + H(+). The catalysed reaction is a 1-acyl-sn-glycero-3-phosphocholine + H2O = sn-glycerol 3-phosphocholine + a fatty acid + H(+). The enzyme catalyses 1-hexadecanoyl-2-(9Z,12Z-octadecadienoyl)-sn-glycero-3-phosphoethanolamine + H2O = 1-hexadecanoyl-sn-glycero-3-phosphoethanolamine + (9Z,12Z)-octadecadienoate + H(+). It catalyses the reaction 1-hexadecanoyl-2-(5Z,8Z,11Z,14Z-eicosatetraenoyl)-sn-glycero-3-phosphoethanolamine + H2O = 1-hexadecanoyl-sn-glycero-3-phosphoethanolamine + (5Z,8Z,11Z,14Z)-eicosatetraenoate + H(+). It carries out the reaction 1-hexadecanoyl-sn-glycero-3-phosphocholine + H2O = sn-glycerol 3-phosphocholine + hexadecanoate + H(+). The catalysed reaction is 1-hexadecanoyl-2-(5Z,8Z,11Z,14Z-eicosatetraenoyl)-sn-glycero-3-phosphocholine + H2O = 1-hexadecanoyl-sn-glycero-3-phosphocholine + (5Z,8Z,11Z,14Z)-eicosatetraenoate + H(+). The enzyme catalyses 1-hexadecanoyl-2-(5Z,8Z,11Z,14Z-eicosatetraenoyl)-sn-glycero-3-phosphocholine + H2O = 2-(5Z,8Z,11Z,14Z)-eicosatetraenoyl-sn-glycero-3-phosphocholine + hexadecanoate + H(+). Stimulated by cytosolic Ca(2+). Functionally, calcium-dependent phospholipase A1 and A2 and lysophospholipase that may play a role in membrane phospholipid remodeling. Calcium-dependent phospholipase A2 and lysophospholipase. Cleaves the ester bond of the fatty acyl group attached to the sn-2 position of phosphatidylethanolamines, producing lysophospholipids that may be used in deacylation-reacylation cycles. Hydrolyzes lysophosphatidylcholines with low efficiency but is inefficient toward phosphatidylcholines. Its function is as follows. Calcium-dependent phospholipase A1 and A2 and lysophospholipase. Cleaves the ester bond of the fatty acyl group attached to the sn-1 or sn-2 position of diacyl phospholipids (phospholipase A1 and A2 activity, respectively), producing lysophospholipids that may be used in deacylation-reacylation cycles. Can further hydrolyze lysophospholipids enabling complete deacylation. Has no activity toward alkylacyl phospholipids. The sequence is that of Cytosolic phospholipase A2 beta (PLA2G4B) from Homo sapiens (Human).